The chain runs to 468 residues: Chromosomal replication initiator protein DnaA (468 aa).

The segment at 1-90 (MTQEKWGLLC…NSPMRPARAA (90 aa)) is domain I, interacts with DnaA modulators. The segment at 91-126 (RPAAAAAAAAAAVEAPQVSAPRATDTSDVLDGLQAA) is domain II. Positions 127-348 (PLDPRFTFDS…GALTRLFAFA (222 aa)) are domain III, AAA+ region. ATP contacts are provided by G171, G173, K174, and T175. The tract at residues 349-468 (SLVGREIDME…VEMLRRALEA (120 aa)) is domain IV, binds dsDNA.

It belongs to the DnaA family. In terms of assembly, oligomerizes as a right-handed, spiral filament on DNA at oriC.

The protein localises to the cytoplasm. Functionally, plays an essential role in the initiation and regulation of chromosomal replication. ATP-DnaA binds to the origin of replication (oriC) to initiate formation of the DNA replication initiation complex once per cell cycle. Binds the DnaA box (a 9 base pair repeat at the origin) and separates the double-stranded (ds)DNA. Forms a right-handed helical filament on oriC DNA; dsDNA binds to the exterior of the filament while single-stranded (ss)DNA is stabiized in the filament's interior. The ATP-DnaA-oriC complex binds and stabilizes one strand of the AT-rich DNA unwinding element (DUE), permitting loading of DNA polymerase. After initiation quickly degrades to an ADP-DnaA complex that is not apt for DNA replication. Binds acidic phospholipids. This Ruegeria pomeroyi (strain ATCC 700808 / DSM 15171 / DSS-3) (Silicibacter pomeroyi) protein is Chromosomal replication initiator protein DnaA.